We begin with the raw amino-acid sequence, 452 residues long: Glucose-6-phosphate isomerase (452 aa).

Catalysis depends on E290, which acts as the Proton donor. Residues H311 and K425 contribute to the active site.

It belongs to the GPI family.

Its subcellular location is the cytoplasm. It carries out the reaction alpha-D-glucose 6-phosphate = beta-D-fructose 6-phosphate. It participates in carbohydrate biosynthesis; gluconeogenesis. Its pathway is carbohydrate degradation; glycolysis; D-glyceraldehyde 3-phosphate and glycerone phosphate from D-glucose: step 2/4. Its function is as follows. Catalyzes the reversible isomerization of glucose-6-phosphate to fructose-6-phosphate. The protein is Glucose-6-phosphate isomerase of Limosilactobacillus reuteri (strain DSM 20016) (Lactobacillus reuteri).